The sequence spans 793 residues: Putative glutamate--cysteine ligase 2-3 (793 aa).

Residues 1 to 407 (MLASDPRKVG…RFWDRGDTAD (407 aa)) form a carboxylate-amine ligase region. Positions 367–390 (TEHLPDVEVPPPREPGPKSTGAGR) are disordered. The peptidase M20 stretch occupies residues 408 to 793 (MTWTESTELD…ALTRLEDQSG (386 aa)).

This sequence in the C-terminal section; belongs to the glutamate--cysteine ligase type 2 family. YbdK subfamily.

The enzyme catalyses L-cysteine + L-glutamate + ATP = gamma-L-glutamyl-L-cysteine + ADP + phosphate + H(+). ATP-dependent carboxylate-amine ligase which exhibits weak glutamate--cysteine ligase activity. The chain is Putative glutamate--cysteine ligase 2-3 from Rhodococcus jostii (strain RHA1).